A 193-amino-acid chain; its full sequence is Potassium-transporting ATPase KdpC subunit (193 aa).

The helical transmembrane segment at P7–M27 threads the bilayer.

Belongs to the KdpC family. In terms of assembly, the system is composed of three essential subunits: KdpA, KdpB and KdpC.

It is found in the cell inner membrane. In terms of biological role, part of the high-affinity ATP-driven potassium transport (or Kdp) system, which catalyzes the hydrolysis of ATP coupled with the electrogenic transport of potassium into the cytoplasm. This subunit acts as a catalytic chaperone that increases the ATP-binding affinity of the ATP-hydrolyzing subunit KdpB by the formation of a transient KdpB/KdpC/ATP ternary complex. This is Potassium-transporting ATPase KdpC subunit from Burkholderia cenocepacia (strain ATCC BAA-245 / DSM 16553 / LMG 16656 / NCTC 13227 / J2315 / CF5610) (Burkholderia cepacia (strain J2315)).